A 266-amino-acid polypeptide reads, in one-letter code: Calpain small subunit 1 (266 aa).

Methionine 1 is modified (N-acetylmethionine). Serine 6 bears the Phosphoserine mark. One can recognise an EF-hand 1; atypical domain in the interval 94 to 128 (EEVRQFRRLFAQLAGDDMEVSATELMNILNKVVTR). Ca(2+) is bound by residues alanine 107, aspartate 110, glutamate 112, glutamate 117, aspartate 135, aspartate 150, aspartate 152, threonine 154, lysine 156, and glutamate 161. EF-hand domains lie at 137-170 (FGID…NNIK), 167-202 (NNIK…AGFH), 203-231 (LNEH…ISCL), and 232-266 (VRLD…TMYS). Lysine 177 bears the N6-acetyllysine mark. The Ca(2+) site is built by aspartate 180, aspartate 182, serine 184, threonine 186, glutamate 191, and aspartate 223.

In terms of assembly, homodimer or heterodimer of a large (catalytic) and a small (regulatory) subunit. In presence of calcium, the heterodimer dissociates.

It is found in the cytoplasm. The protein localises to the cell membrane. Regulatory subunit of the calcium-regulated non-lysosomal thiol-protease which catalyzes limited proteolysis of substrates involved in cytoskeletal remodeling and signal transduction. Essential for embryonic development. This chain is Calpain small subunit 1 (CAPNS1), found in Sus scrofa (Pig).